The following is a 74-amino-acid chain: NADH dehydrogenase [ubiquinone] 1 alpha subcomplex assembly factor 8 (74 aa).

The region spanning Leu22–Thr69 is the CHCH domain. 2 short sequence motifs (cx9C motif) span residues Cys25–Cys35 and Cys51–Cys61. 2 disulfide bridges follow: Cys25-Cys61 and Cys35-Cys51.

Interacts with NDUFAF5.

It is found in the mitochondrion. Its function is as follows. Involved in the assembly of mitochondrial NADH:ubiquinone oxidoreductase complex (complex I, MT-ND1). Required to stabilize NDUFAF5. This is NADH dehydrogenase [ubiquinone] 1 alpha subcomplex assembly factor 8 from Homo sapiens (Human).